The following is a 285-amino-acid chain: Polyamine aminopropyltransferase (285 aa).

The PABS domain maps to 2 to 237 (DLWFSESHTP…GYWCFGFASK (236 aa)). Residue Q31 coordinates S-methyl-5'-thioadenosine. D86 provides a ligand contact to spermidine. S-methyl-5'-thioadenosine contacts are provided by residues E106 and 137-138 (DG). The active-site Proton acceptor is D155.

The protein belongs to the spermidine/spermine synthase family. As to quaternary structure, homodimer or homotetramer.

Its subcellular location is the cytoplasm. The catalysed reaction is S-adenosyl 3-(methylsulfanyl)propylamine + putrescine = S-methyl-5'-thioadenosine + spermidine + H(+). The protein operates within amine and polyamine biosynthesis; spermidine biosynthesis; spermidine from putrescine: step 1/1. Functionally, catalyzes the irreversible transfer of a propylamine group from the amino donor S-adenosylmethioninamine (decarboxy-AdoMet) to putrescine (1,4-diaminobutane) to yield spermidine. The chain is Polyamine aminopropyltransferase from Streptococcus uberis (strain ATCC BAA-854 / 0140J).